Reading from the N-terminus, the 328-residue chain is Malate dehydrogenase (328 aa).

12 to 18 (GAAGQIA) lines the NAD(+) pocket. Residues R93 and R99 each coordinate substrate. Residues N106, Q113, and 130–132 (VGN) each bind NAD(+). Residues N132 and R163 each contribute to the substrate site. Residue H188 is the Proton acceptor of the active site.

This sequence belongs to the LDH/MDH superfamily. MDH type 2 family.

It catalyses the reaction (S)-malate + NAD(+) = oxaloacetate + NADH + H(+). Functionally, catalyzes the reversible oxidation of malate to oxaloacetate. This chain is Malate dehydrogenase, found in Burkholderia cenocepacia (strain HI2424).